Reading from the N-terminus, the 343-residue chain is MSAFTPASEVLLRHSDDFEQSRILFAGDLQDDLPARLDTAASRAHTQQFHHWQVLSRQMGDNARFSLVATADDVADCDTLIYYWPKNKPEAQFQLMNLLSLLPVGTDIFVVGENRSGVRSAEQMLADYAPLNKVDSARRCGLYFGRLEKQPVFDADKFWGEYSVDGLTVKTLPGVFSRDGLDVGSQLLLSTLTPHTKGKVLDVGCGAGVLSVAFARHSPKIRLTLCDVSAPAVEASRATLAANGVEGEVFASNVFSEVKGRFDMIISNPPFHDGMQTSLDAAQTLIRGAVRHLNSGGELRIVANAFLPYPDVLDETFGFHEVIAQTGRFKVYRAIMTRQAKKG.

Belongs to the methyltransferase superfamily. RsmC family. As to quaternary structure, monomer.

The protein localises to the cytoplasm. It catalyses the reaction guanosine(1207) in 16S rRNA + S-adenosyl-L-methionine = N(2)-methylguanosine(1207) in 16S rRNA + S-adenosyl-L-homocysteine + H(+). In terms of biological role, specifically methylates the guanine in position 1207 of 16S rRNA in the 30S particle. This Escherichia coli (strain ATCC 8739 / DSM 1576 / NBRC 3972 / NCIMB 8545 / WDCM 00012 / Crooks) protein is Ribosomal RNA small subunit methyltransferase C.